We begin with the raw amino-acid sequence, 745 residues long: MEKDVVSLEDALEHGLTKEEFQKIQEILGRIPNSTELGIFSAMWSEHCSYKNSILKLKTLPTTSDKLLAKAGEENAGAMDIGDGLAVVFKIESHNHPTAVEPYQGAATGVGGIMRDIFTMGARPIVSLNSLRFGNPDEPKNKYLLSRAVKGIGDYGNSLGIAVSGGELFIDECFSKNPLVNAMTVGVVRHDQMASATTGGQVGNSVYIVGATTGRDGIHGASFASKDLSKESESKRSAVQVGDPFMEKLLMEASLEAIQKGLLVGIQDMGAAGISCATSEMSAKGKTGMKIDLDLVPFRETGMNAYEAMLSESQERMLVVPKKGKESELVSIFEKWNLNAVKIGEVTADGMIEIYMGGKLKAKIPAESLVLGGGAPRYERETKRPSYLDAVKTWKPDEIPDVTKGANSKEILLKILSSWNVCSRKPITEQYDSEVGLVKLIGPGLDGGLSAIPGTNKALATATDCNSRYTYLDPYKGAEFAVCEAARNVYVTGATPYGVTNNLNFANPYIPENYYIFSECIRGMGDACRFLGLPVTGGNVSFYNESPEGPIFPTPTIGMVGILENKEKLIFNFPKEIGVELAVLGNFRPSLGGSEYLKKIHGQINGSIPELDIKEELELCKLILSLNESRILKSAKDLSLGGIAVALSKTVLFSGLGIESDLTSLRRNRLDLTLFGESSTAVLVGFDSLSKEDIRKQTEAYGLKFYPIGKTNSSGILEIKDAEIKISFQELSGPYEKGLEAVFAL.

Residue histidine 47 is part of the active site. Residues tyrosine 50 and lysine 90 each contribute to the ATP site. Glutamate 92 is a Mg(2+) binding site. Residues 93 to 96 (SHNH) and arginine 115 each bind substrate. The active-site Proton acceptor is the histidine 94. Aspartate 116 serves as a coordination point for Mg(2+). Glutamine 240 serves as a coordination point for substrate. Aspartate 268 contributes to the Mg(2+) binding site. 312–314 (ESQ) is a substrate binding site. The ATP site is built by asparagine 501 and glycine 538. Asparagine 539 contacts Mg(2+). Serine 541 lines the substrate pocket.

This sequence belongs to the FGAMS family. Monomer. Part of the FGAM synthase complex composed of 1 PurL, 1 PurQ and 2 PurS subunits.

Its subcellular location is the cytoplasm. The enzyme catalyses N(2)-formyl-N(1)-(5-phospho-beta-D-ribosyl)glycinamide + L-glutamine + ATP + H2O = 2-formamido-N(1)-(5-O-phospho-beta-D-ribosyl)acetamidine + L-glutamate + ADP + phosphate + H(+). It participates in purine metabolism; IMP biosynthesis via de novo pathway; 5-amino-1-(5-phospho-D-ribosyl)imidazole from N(2)-formyl-N(1)-(5-phospho-D-ribosyl)glycinamide: step 1/2. Functionally, part of the phosphoribosylformylglycinamidine synthase complex involved in the purines biosynthetic pathway. Catalyzes the ATP-dependent conversion of formylglycinamide ribonucleotide (FGAR) and glutamine to yield formylglycinamidine ribonucleotide (FGAM) and glutamate. The FGAM synthase complex is composed of three subunits. PurQ produces an ammonia molecule by converting glutamine to glutamate. PurL transfers the ammonia molecule to FGAR to form FGAM in an ATP-dependent manner. PurS interacts with PurQ and PurL and is thought to assist in the transfer of the ammonia molecule from PurQ to PurL. This chain is Phosphoribosylformylglycinamidine synthase subunit PurL, found in Leptospira interrogans serogroup Icterohaemorrhagiae serovar copenhageni (strain Fiocruz L1-130).